A 435-amino-acid chain; its full sequence is Casein kinase I homolog 2 (435 aa).

The Protein kinase domain occupies 12–282 (YRVGRKIGEG…FLQELFDDVL (271 aa)). ATP contacts are provided by residues 18-26 (IGEGSFGVI) and K41. D131 serves as the catalytic Proton acceptor. Position 361 is a phosphoserine (S361).

This sequence belongs to the protein kinase superfamily. CK1 Ser/Thr protein kinase family. Casein kinase I subfamily.

The protein resides in the cytoplasm. It catalyses the reaction L-seryl-[protein] + ATP = O-phospho-L-seryl-[protein] + ADP + H(+). The catalysed reaction is L-threonyl-[protein] + ATP = O-phospho-L-threonyl-[protein] + ADP + H(+). Its function is as follows. Casein kinases are operationally defined by their preferential utilization of acidic proteins such as caseins as substrates. May contribute to the regulation of morphology. This is Casein kinase I homolog 2 (cki2) from Schizosaccharomyces pombe (strain 972 / ATCC 24843) (Fission yeast).